A 545-amino-acid polypeptide reads, in one-letter code: Chaperonin GroEL (545 aa).

ATP is bound by residues 29–32, Lys-50, 86–90, Gly-415, and Asp-495; these read TLGP and DGTTT.

Belongs to the chaperonin (HSP60) family. Forms a cylinder of 14 subunits composed of two heptameric rings stacked back-to-back. Interacts with the co-chaperonin GroES.

It is found in the cytoplasm. The catalysed reaction is ATP + H2O + a folded polypeptide = ADP + phosphate + an unfolded polypeptide.. Functionally, together with its co-chaperonin GroES, plays an essential role in assisting protein folding. The GroEL-GroES system forms a nano-cage that allows encapsulation of the non-native substrate proteins and provides a physical environment optimized to promote and accelerate protein folding. The protein is Chaperonin GroEL of Porphyromonas gingivalis (strain ATCC BAA-308 / W83).